We begin with the raw amino-acid sequence, 347 residues long: VIP36-like protein (347 aa).

Residues 1 to 43 (MAAASRPSWWQRWRRRAWARDGAKLLLFLLLLGSGPGPRHVRA) form the signal peptide. Over 44-312 (GQAVEYLKRE…VPPTPLSGLA (269 aa)) the chain is Lumenal. The 226-residue stretch at 48-273 (EYLKREHSLS…DVISLKLFEL (226 aa)) folds into the L-type lectin-like domain. A carbohydrate-binding residues include Ser-92 and Asp-127. Asp-158, Tyr-160, and Asn-162 together coordinate Ca(2+). 160–162 (YPN) provides a ligand contact to a carbohydrate. N-linked (GlcNAc...) asparagine glycosylation occurs at Asn-180. His-187 serves as a coordination point for a carbohydrate. Asp-190 is a Ca(2+) binding site. Cys-199 and Cys-236 are oxidised to a cystine. 257 to 259 (GDL) contributes to the a carbohydrate binding site. Residues 313–335 (LFLIVFFSLVFSVFAIVIGIILY) form a helical membrane-spanning segment. Residues 336–347 (NKWQDQSRKRFY) are Cytoplasmic-facing. Residues 343–345 (RKR) carry the Endoplasmic reticulum retention signal motif.

It localises to the endoplasmic reticulum membrane. The protein localises to the golgi apparatus membrane. May be involved in the regulation of export from the endoplasmic reticulum of a subset of glycoproteins. May function as a regulator of ERGIC-53. This chain is VIP36-like protein (Lman2l), found in Mus musculus (Mouse).